An 884-amino-acid chain; its full sequence is MFPALSGAAIRQTFLDFYAQRGHQVLPSASLVPEDPTVLLTIAGMLPFKPIFLGQRDPEYPRVTTAQKCVRTNDIENVGRTARHHTFFEMLGNFSFGDYFKKEAIAWAWELVTEVFGLPPERLVVSVFREDEEAFALWRDEIGIPAHRIQRMGEADNFWAAGPTGPCGPCSEIYYDFKPELGDERIDLEDDSRFLEIYNLVFMELNRDSEGHLMPLAKQNIDTGLGLERLAQVLQGVPNNYETDLIFPIIQTAAGIAGLNYSKANPEQQISLKVIGDHARAVMHLIADGVLPSNVDRGYVLRRLIRRMVRHGRLLGIGEPFTIPVIETAIQLAEAAYPQVRERETLIKTELQREEEQFLKTLERGERLLLDLFTAVESSRRDSSSPKQISGADAFKLFDTYGFPLELTQEIAQEHGFSVDLEGFEQEMEKQRQRARAAHQTIDLTAQGSLDELADFLSQTEFLGYSQSSARGVVEALLVEGKSVPQVEAGQAVQVVLDRTPFYAEAGGQIGDRGYLSGDGLLVRIEDVQKQGDLFVHFGRVERGILRVGDPVQAQIDLACRRRAQAHHTATHLLQAALKRIVDPSIGQAGSLVAFDRLRFDFTLSRPVTPEELEQIENLVNTWIAEAHAAQVAIMPLAEAKARGAVAMFGEKYGAEVRVIDFPGVSMELCGGTHVNNTAEIGLFKIIAETGVAAGIRRIEAVAGPAVLEYLNERDRVVRELSAQFKAKPQELPERVAALQAELKAAQKELEEVRSQLALLQAEGLLAQAVAVADLKVLVAELGSTTPEALKTAAEHLLHKLGEGAVVLGSVPEAGKVSLVAAFSPAVQQLGLKAGSFIGEIAKLTGGGGGGRPNLAQAGGKQPEKLAEALQVARERLQAELISR.

Histidine 568, histidine 572, cysteine 670, and histidine 674 together coordinate Zn(2+).

The protein belongs to the class-II aminoacyl-tRNA synthetase family. Requires Zn(2+) as cofactor.

The protein resides in the cytoplasm. The enzyme catalyses tRNA(Ala) + L-alanine + ATP = L-alanyl-tRNA(Ala) + AMP + diphosphate. Its function is as follows. Catalyzes the attachment of alanine to tRNA(Ala) in a two-step reaction: alanine is first activated by ATP to form Ala-AMP and then transferred to the acceptor end of tRNA(Ala). Also edits incorrectly charged Ser-tRNA(Ala) and Gly-tRNA(Ala) via its editing domain. The protein is Alanine--tRNA ligase of Synechococcus sp. (strain JA-2-3B'a(2-13)) (Cyanobacteria bacterium Yellowstone B-Prime).